The following is a 62-amino-acid chain: Photosystem II reaction center protein Z (62 aa).

2 helical membrane passes run 8 to 28 (AVFA…VVFA) and 41 to 61 (FSGT…NSLI).

It belongs to the PsbZ family. As to quaternary structure, PSII is composed of 1 copy each of membrane proteins PsbA, PsbB, PsbC, PsbD, PsbE, PsbF, PsbH, PsbI, PsbJ, PsbK, PsbL, PsbM, PsbT, PsbY, PsbZ, Psb30/Ycf12, at least 3 peripheral proteins of the oxygen-evolving complex and a large number of cofactors. It forms dimeric complexes.

The protein resides in the plastid. It is found in the chloroplast thylakoid membrane. In terms of biological role, may control the interaction of photosystem II (PSII) cores with the light-harvesting antenna, regulates electron flow through the 2 photosystem reaction centers. PSII is a light-driven water plastoquinone oxidoreductase, using light energy to abstract electrons from H(2)O, generating a proton gradient subsequently used for ATP formation. The polypeptide is Photosystem II reaction center protein Z (Morus indica (Mulberry)).